A 417-amino-acid chain; its full sequence is Snake venom metalloproteinase kistomin (417 aa).

An N-terminal signal peptide occupies residues 1–20 (MIEVLLVTICLAAFPYQGSS). A propeptide spanning residues 21 to 189 (IILESGNVND…KKPFRLNLTP (169 aa)) is cleaved from the precursor. The region spanning 197 to 391 (AKVYLVIVAD…RKPECLFKKP (195 aa)) is the Peptidase M12B domain. 3 disulfides stabilise this stretch: C308–C386, C348–C370, and C350–C353. H333 provides a ligand contact to Zn(2+). Residue E334 is part of the active site. Zn(2+) contacts are provided by H337 and H343. Positions 392 to 417 (LRTDTVSTPVSGNEPLEVITMDDFYA) are excised as a propeptide.

The protein belongs to the venom metalloproteinase (M12B) family. P-I subfamily. In terms of assembly, monomer. Zn(2+) is required as a cofactor. As to expression, expressed by the venom gland.

Its subcellular location is the secreted. Inhibited by EDTA, and O-phenanthrolene. Its function is as follows. Snake venom zinc metalloprotease that inhibits platelet aggregation by binding specifically to platelet glycoprotein VI (GP6) and platelet glycoprotein Ib alpha (GP1BA). It inhibits the interaction between collagen and platelet GP6 by cleaving GP6 (at '225-Glu-|-Ala-226' and '238-Val-|-Phe-239' bonds), and inhibits vWF-induced platelet aggregation by cleaving GP1BA and vWF. Cleavage of GP1BA occurs at two distinct sites to generate two soluble fragments. It also cleaves alpha- (FGA) and subsequently the gamma-chain (FGG) of fibrinogen, leaving the beta-chain unaffected. It also inhibits collagen-, convulxin- and ristocetin-induced platelet aggregation. It blocks the adhesion of platelet to immobilized collagen, but only exerts a slight inhibition to fibrinogen. In vivo, it exerts potent antithrombotic effect. The sequence is that of Snake venom metalloproteinase kistomin from Calloselasma rhodostoma (Malayan pit viper).